Here is a 503-residue protein sequence, read N- to C-terminus: Probable cytosol aminopeptidase (503 aa).

Mn(2+)-binding residues include K270 and D275. K282 is an active-site residue. Positions 293, 352, and 354 each coordinate Mn(2+). R356 is a catalytic residue.

It belongs to the peptidase M17 family. The cofactor is Mn(2+).

The protein resides in the cytoplasm. It catalyses the reaction Release of an N-terminal amino acid, Xaa-|-Yaa-, in which Xaa is preferably Leu, but may be other amino acids including Pro although not Arg or Lys, and Yaa may be Pro. Amino acid amides and methyl esters are also readily hydrolyzed, but rates on arylamides are exceedingly low.. It carries out the reaction Release of an N-terminal amino acid, preferentially leucine, but not glutamic or aspartic acids.. Its function is as follows. Presumably involved in the processing and regular turnover of intracellular proteins. Catalyzes the removal of unsubstituted N-terminal amino acids from various peptides. The chain is Probable cytosol aminopeptidase from Escherichia coli O139:H28 (strain E24377A / ETEC).